A 205-amino-acid chain; its full sequence is MSKRQSAKYKLDRRMGENIWGRPKSPVNRREYGPGQHGQRRKGKLSDFGQQLRAKQKLKGYYGDLSEKQFRRIYDEANRRKGETTENLIGLLESRLDAIVFRAKFVPTPFAARQFVNHGHVKVNGRRVNIPSYRCKPGDVIEVREKSKQLTVVLESVALAERDVPDYIEVDHNKMTAKYVRMPALADVPYAVHMEPNLVIEYYSR.

Residues 1–49 form a disordered region; sequence MSKRQSAKYKLDRRMGENIWGRPKSPVNRREYGPGQHGQRRKGKLSDFG. The S4 RNA-binding domain maps to 94–157; the sequence is SRLDAIVFRA…KQLTVVLESV (64 aa).

Belongs to the universal ribosomal protein uS4 family. Part of the 30S ribosomal subunit. Contacts protein S5. The interaction surface between S4 and S5 is involved in control of translational fidelity.

Functionally, one of the primary rRNA binding proteins, it binds directly to 16S rRNA where it nucleates assembly of the body of the 30S subunit. In terms of biological role, with S5 and S12 plays an important role in translational accuracy. The polypeptide is Small ribosomal subunit protein uS4 (Chelativorans sp. (strain BNC1)).